The chain runs to 350 residues: Ion-translocating oxidoreductase complex subunit D (350 aa).

A run of 5 helical transmembrane segments spans residues 20–40 (VMVLVILCLIPGVFLQSYFFG), 44–64 (LIQISLACLAALASEAFILKI), 68–88 (PVLNTLKDASALLTAILLAIS), 89–109 (IPPLAPWWIVVIGTIFAIIFV), and 125–145 (MAGYVLLLISFPVQMTSWLPV). An FMN phosphoryl threonine modification is found at Thr-187. 5 consecutive transmembrane segments (helical) span residues 215 to 235 (SWQQIYWINGAFLAGGLILLF), 241 to 261 (WHIPMSFLLGIGIFSFIAFAY), 267 to 287 (APPLFHLFSGATMLGAFFILS), 300 to 320 (ILYALLIAFIVVIIRNVGGYP), and 322 to 342 (AVAFAVLLGNMCVPLIDYYTQ).

The protein belongs to the NqrB/RnfD family. As to quaternary structure, the complex is composed of six subunits: RnfA, RnfB, RnfC, RnfD, RnfE and RnfG. It depends on FMN as a cofactor.

Its subcellular location is the cell inner membrane. Its function is as follows. Part of a membrane-bound complex that couples electron transfer with translocation of ions across the membrane. This Psychromonas ingrahamii (strain DSM 17664 / CCUG 51855 / 37) protein is Ion-translocating oxidoreductase complex subunit D.